The chain runs to 468 residues: MSFLSISRLAPRLLSSKNAACVVVAARNASASTNLKDVLSDLVPKEQSRIKNFKQQYGKTSIGQITVDMVYGGMRGVKGLVYETSVLDPDEGIRFRGYSIPECQQLLPKAPGGEEPLPEGLFWLLVTGQVPTEEQVSWLSKEWAKRAALPSHVVTMLDNFPTNLHPMSQFSAAITALNSESSFARAYSEGVNKAKYWEFVYEDSMDLIAKLPCVAAKIYRNLYREGSSIGAIDSNLDWSHNFTNMLGYTEPQFTELMRLYLTIHSDHEGGNVSAHTSHLVGSALSDPYLSFSAAMNGLAGPLHGLANQEVLVWLTALQKELGGEVSDEKMRDYIWNTLKSGRVVPGYGHAVLRKTDPRYTCQREFALKHLPNDPMFKLVAQLYKIVPNVLLEQGKAKNPWPNVDAHSGVLLQYYGMTEMNYYTVLFGVSRALGVLAQLVWSRALGFPLERPKSMSTDGLMALVGAKSG.

A mitochondrion-targeting transit peptide spans 1–30 (MSFLSISRLAPRLLSSKNAACVVVAARNAS). Active-site residues include H303 and H349. R358 is an oxaloacetate binding site. Residue D404 is part of the active site. Oxaloacetate is bound by residues R430 and R450.

The protein belongs to the citrate synthase family. Homodimer.

It localises to the mitochondrion matrix. The enzyme catalyses oxaloacetate + acetyl-CoA + H2O = citrate + CoA + H(+). It participates in carbohydrate metabolism; tricarboxylic acid cycle; isocitrate from oxaloacetate: step 1/2. Functionally, key enzyme of the Krebs tricarboxylic acid cycle which catalyzes the synthesis of citrate from acetyl coenzyme A and oxaloacetate. This chain is Citrate synthase, mitochondrial (cs), found in Danio rerio (Zebrafish).